A 446-amino-acid polypeptide reads, in one-letter code: Amino-acid acetyltransferase (446 aa).

The region spanning 299-431 is the N-acetyltransferase domain; sequence EQVRDAEIDD…SHLPMKKQKL (133 aa).

Belongs to the acetyltransferase family. ArgA subfamily.

The protein localises to the cytoplasm. It catalyses the reaction L-glutamate + acetyl-CoA = N-acetyl-L-glutamate + CoA + H(+). The protein operates within amino-acid biosynthesis; L-arginine biosynthesis; N(2)-acetyl-L-ornithine from L-glutamate: step 1/4. The chain is Amino-acid acetyltransferase from Aliivibrio fischeri (strain MJ11) (Vibrio fischeri).